We begin with the raw amino-acid sequence, 354 residues long: Cysteine proteinase 1 (354 aa).

A signal peptide spans 1 to 24 (MARRNPLLFAIVVTILFVVCYGSA). A propeptide spans 25-125 (LIAQTPPPVD…HKEDVHVDDS (101 aa)) (activation peptide). Disulfide bonds link cysteine 150–cysteine 191, cysteine 184–cysteine 229, and cysteine 282–cysteine 330. Residue cysteine 153 is part of the active site. Residue asparagine 208 is glycosylated (N-linked (GlcNAc...) asparagine). Residues histidine 289 and asparagine 309 contribute to the active site.

It belongs to the peptidase C1 family.

Functionally, the cysteine proteinases have a potential role in host-parasite interaction and virulence. The chain is Cysteine proteinase 1 (CYS1) from Leishmania pifanoi.